The following is a 455-amino-acid chain: Ribulose bisphosphate carboxylase large chain (455 aa).

K5 bears the N6,N6,N6-trimethyllysine mark. Residues N114 and T164 each contribute to the substrate site. The Proton acceptor role is filled by K166. Residue K168 participates in substrate binding. Mg(2+) contacts are provided by K192, D194, and E195. N6-carboxylysine is present on K192. H285 functions as the Proton acceptor in the catalytic mechanism. Substrate contacts are provided by R286, H318, and S370.

This sequence belongs to the RuBisCO large chain family. Type I subfamily. In terms of assembly, heterohexadecamer of 8 large chains and 8 small chains; disulfide-linked. The disulfide link is formed within the large subunit homodimers. The cofactor is Mg(2+). The disulfide bond which can form in the large chain dimeric partners within the hexadecamer appears to be associated with oxidative stress and protein turnover.

The protein resides in the plastid. Its subcellular location is the chloroplast. The catalysed reaction is 2 (2R)-3-phosphoglycerate + 2 H(+) = D-ribulose 1,5-bisphosphate + CO2 + H2O. The enzyme catalyses D-ribulose 1,5-bisphosphate + O2 = 2-phosphoglycolate + (2R)-3-phosphoglycerate + 2 H(+). In terms of biological role, ruBisCO catalyzes two reactions: the carboxylation of D-ribulose 1,5-bisphosphate, the primary event in carbon dioxide fixation, as well as the oxidative fragmentation of the pentose substrate in the photorespiration process. Both reactions occur simultaneously and in competition at the same active site. This is Ribulose bisphosphate carboxylase large chain from Brownea coccinea (Rose of Venezuela).